The primary structure comprises 393 residues: Tryptophan synthase beta chain (393 aa).

Lys85 carries the N6-(pyridoxal phosphate)lysine modification.

This sequence belongs to the TrpB family. In terms of assembly, tetramer of two alpha and two beta chains. The cofactor is pyridoxal 5'-phosphate.

It catalyses the reaction (1S,2R)-1-C-(indol-3-yl)glycerol 3-phosphate + L-serine = D-glyceraldehyde 3-phosphate + L-tryptophan + H2O. Its pathway is amino-acid biosynthesis; L-tryptophan biosynthesis; L-tryptophan from chorismate: step 5/5. Its function is as follows. The beta subunit is responsible for the synthesis of L-tryptophan from indole and L-serine. The sequence is that of Tryptophan synthase beta chain (trpB) from Helicobacter pylori (strain ATCC 700392 / 26695) (Campylobacter pylori).